We begin with the raw amino-acid sequence, 329 residues long: Phenylalanine--tRNA ligase alpha subunit (329 aa).

Mg(2+) is bound at residue Glu246.

Belongs to the class-II aminoacyl-tRNA synthetase family. Phe-tRNA synthetase alpha subunit type 1 subfamily. As to quaternary structure, tetramer of two alpha and two beta subunits. Requires Mg(2+) as cofactor.

It localises to the cytoplasm. It carries out the reaction tRNA(Phe) + L-phenylalanine + ATP = L-phenylalanyl-tRNA(Phe) + AMP + diphosphate + H(+). The sequence is that of Phenylalanine--tRNA ligase alpha subunit from Helicobacter hepaticus (strain ATCC 51449 / 3B1).